A 276-amino-acid polypeptide reads, in one-letter code: MSDLIKIIDQAFEDRANITPATKGEVVEAVEEALSLLDSGKRRVAELGDNGEWVVNQWLKKAVLLSFRLTGNAPMNGGYDKVPLKFTNWSEDQFKQAGFRAVPGAVVRRGAFISKGAVLMPSFVNIGAYVGENTMVDTWATVGSCAQIGANVHISGGAGIGGVLEPLQAGPVIIGDNAFIGARSEVAEGVTVGEGAVLSMGVFIGASTRIIDRATGEIHMGKVPPYAVVVPGSLPGKPLPDGRPGPSLYCAVIVKTADERTRSKTSINQLLREAQN.

Substrate contacts are provided by Arg100 and Asp137.

This sequence belongs to the transferase hexapeptide repeat family. In terms of assembly, homotrimer.

Its subcellular location is the cytoplasm. It catalyses the reaction (S)-2,3,4,5-tetrahydrodipicolinate + succinyl-CoA + H2O = (S)-2-succinylamino-6-oxoheptanedioate + CoA. It participates in amino-acid biosynthesis; L-lysine biosynthesis via DAP pathway; LL-2,6-diaminopimelate from (S)-tetrahydrodipicolinate (succinylase route): step 1/3. The chain is 2,3,4,5-tetrahydropyridine-2,6-dicarboxylate N-succinyltransferase from Zymomonas mobilis subsp. mobilis (strain ATCC 31821 / ZM4 / CP4).